A 236-amino-acid polypeptide reads, in one-letter code: Cyclin-P3-1 (236 aa).

It belongs to the cyclin family. Cyclin U/P subfamily.

In Oryza sativa subsp. japonica (Rice), this protein is Cyclin-P3-1 (CYCP3-1).